The following is a 222-amino-acid chain: Sigma non-opioid intracellular receptor 1 (222 aa).

Residues 1-7 (MGVAGPW) lie on the Lumenal side of the membrane. A helical transmembrane segment spans residues 8-29 (VLRVGLGLGAFALLLQGLRGWL). The Cytoplasmic segment spans residues 30 to 222 (ACKRYEFQPA…ASAFFSTLGC (193 aa)). The important for ligand-binding stretch occupies residues 98–105 (SLTEYVLL). The interval 176–222 (FVPSTLAFALADTLFSTQDFITLFYTLRAYTKGLLLEASAFFSTLGC) is C-terminal hydrophobic region.

The protein belongs to the ERG2 family. Homotrimer.

Its subcellular location is the nucleus inner membrane. The protein resides in the nucleus outer membrane. The protein localises to the nucleus envelope. It localises to the cytoplasmic vesicle. It is found in the endoplasmic reticulum membrane. Its subcellular location is the membrane. Its function is as follows. May function in lipid transport from the endoplasmic reticulum and be involved in a wide array of cellular functions probably through regulation of the biogenesis of lipid microdomains at the plasma membrane. May regulate calcium efflux at the endoplasmic reticulum. In Gallus gallus (Chicken), this protein is Sigma non-opioid intracellular receptor 1 (SIGMAR1).